Reading from the N-terminus, the 404-residue chain is WD repeat and SOCS box-containing protein 2 (404 aa).

5 WD repeats span residues 105–148 (PPSR…LLLN), 151–191 (GHQD…KQIQ), 195–234 (GHLQ…LIRK), 237–276 (GHQS…RLRS), and 291–330 (VHMS…PVAF). Positions 356–404 (HVQFWTAPRVLSSLKHLCRKALRSFLTTYQVLALPIPKKMKEFLTYRTF) constitute an SOCS box domain.

It participates in protein modification; protein ubiquitination. Functionally, may be a substrate-recognition component of a SCF-like ECS (Elongin-Cullin-SOCS-box protein) E3 ubiquitin ligase complex which mediates the ubiquitination and subsequent proteasomal degradation of target proteins. The polypeptide is WD repeat and SOCS box-containing protein 2 (Wsb2) (Mus musculus (Mouse)).